Here is a 214-residue protein sequence, read N- to C-terminus: Peptidyl-tRNA hydrolase (214 aa).

Tyr14 is a tRNA binding site. The Proton acceptor role is filled by His19. Tyr64, Asn66, and Asn113 together coordinate tRNA. The tract at residues 184-214 is disordered; it reads RINAPPPKPEKKRGSETSDPSAESADHAGGG.

Belongs to the PTH family. Monomer.

Its subcellular location is the cytoplasm. It catalyses the reaction an N-acyl-L-alpha-aminoacyl-tRNA + H2O = an N-acyl-L-amino acid + a tRNA + H(+). In terms of biological role, hydrolyzes ribosome-free peptidyl-tRNAs (with 1 or more amino acids incorporated), which drop off the ribosome during protein synthesis, or as a result of ribosome stalling. Catalyzes the release of premature peptidyl moieties from peptidyl-tRNA molecules trapped in stalled 50S ribosomal subunits, and thus maintains levels of free tRNAs and 50S ribosomes. This is Peptidyl-tRNA hydrolase from Roseiflexus castenholzii (strain DSM 13941 / HLO8).